Here is a 383-residue protein sequence, read N- to C-terminus: MYSVGLMSGTSLDGIDAVLAEISGNGRNTKVKQIEFITLEISKDIKDEIRKCCIEEESSVDLICSLNFKLGYLFSKAVKSVCHKANFHIANLDFIASHGQTIFHIPRSYNNFVSSTLQIGEPAVIAYETNTKVISNFRVMDIAAGGEGAPLVPYSEFLLYSDKNKNLALQNIGGIGNITIIPKSCNIDDVFAFDTGPGNMIIDGVCQRLFNRKYDKNGYFASKGKINEEMLKDLMSHKYLSQAPPKSTGREVFGQVYLDNMLNKYKHVDKYDLIATVTMFTAKAIYYNYKNFILPKVNVDTLLIGGGGAHNLTLIGYIKELLLEVEVLTQDEYGYSSDAKEALAFVILGNETLNNSFSNVISATGAKNKVILGNITPKPFGGK.

An ATP-binding site is contributed by glycine 9–aspartate 16.

The protein belongs to the anhydro-N-acetylmuramic acid kinase family.

It carries out the reaction 1,6-anhydro-N-acetyl-beta-muramate + ATP + H2O = N-acetyl-D-muramate 6-phosphate + ADP + H(+). It participates in amino-sugar metabolism; 1,6-anhydro-N-acetylmuramate degradation. The protein operates within cell wall biogenesis; peptidoglycan recycling. Its function is as follows. Catalyzes the specific phosphorylation of 1,6-anhydro-N-acetylmuramic acid (anhMurNAc) with the simultaneous cleavage of the 1,6-anhydro ring, generating MurNAc-6-P. Is required for the utilization of anhMurNAc either imported from the medium or derived from its own cell wall murein, and thus plays a role in cell wall recycling. The chain is Anhydro-N-acetylmuramic acid kinase from Clostridioides difficile (strain 630) (Peptoclostridium difficile).